A 276-amino-acid polypeptide reads, in one-letter code: Undecaprenyl-diphosphatase (276 aa).

A run of 6 helical transmembrane segments spans residues 43 to 63 (RAMAFNIIIQLAAILAVVWEF), 85 to 105 (GNLLLAFMPAVVLGVLFADLI), 109 to 129 (LFNPVTVAAALVVGGVIMLWA), 183 to 203 (AATEFSFFLAMPTMVGAAVYS), 214 to 234 (GDLPVFALGFVTSFIFAMIAV), and 249 to 269 (FAWYRIVFGLFILATWQFGWV).

This sequence belongs to the UppP family.

The protein resides in the cell inner membrane. The enzyme catalyses di-trans,octa-cis-undecaprenyl diphosphate + H2O = di-trans,octa-cis-undecaprenyl phosphate + phosphate + H(+). Functionally, catalyzes the dephosphorylation of undecaprenyl diphosphate (UPP). Confers resistance to bacitracin. The polypeptide is Undecaprenyl-diphosphatase (Pseudomonas putida (strain ATCC 700007 / DSM 6899 / JCM 31910 / BCRC 17059 / LMG 24140 / F1)).